The primary structure comprises 274 residues: Glutamate racemase (274 aa).

Substrate contacts are provided by residues 9–10 and 41–42; these read DS and YG. Cys73 functions as the Proton donor/acceptor in the catalytic mechanism. 74–75 is a substrate binding site; that stretch reads NT. Cys183 acts as the Proton donor/acceptor in catalysis. Residue 184–185 coordinates substrate; sequence TH.

It belongs to the aspartate/glutamate racemases family.

It catalyses the reaction L-glutamate = D-glutamate. It functions in the pathway cell wall biogenesis; peptidoglycan biosynthesis. Its function is as follows. Provides the (R)-glutamate required for cell wall biosynthesis. This chain is Glutamate racemase, found in Shewanella baltica (strain OS195).